The primary structure comprises 369 residues: Dual specificity protein phosphatase 1-B (369 aa).

The Rhodanese domain maps to 21-138 (RAHKCLILDC…FSSQCPEFCN (118 aa)). Threonine 168 is modified (phosphothreonine; by MAPK1). In terms of domain architecture, Tyrosine-protein phosphatase spans 175 to 316 (GPVEILPFLY…LLQFESQVLA (142 aa)). The Phosphocysteine intermediate role is filled by cysteine 260.

Belongs to the protein-tyrosine phosphatase family. Non-receptor class dual specificity subfamily. Phosphorylated by MAPK1/ERK2 at Thr-168 and at one or more serine residues in a progesterone-dependent manner. Phosphorylation reduces its rate of degradation but does not seem to affect phosphatase activity.

The protein resides in the nucleus. The catalysed reaction is O-phospho-L-seryl-[protein] + H2O = L-seryl-[protein] + phosphate. It catalyses the reaction O-phospho-L-threonyl-[protein] + H2O = L-threonyl-[protein] + phosphate. The enzyme catalyses O-phospho-L-tyrosyl-[protein] + H2O = L-tyrosyl-[protein] + phosphate. Its function is as follows. Dual specificity phosphatase that dephosphorylates MAP kinase MAPK1/ERK2 on both 'Thr-188' and 'Tyr-190', regulating its activity during the meiotic cell cycle. This chain is Dual specificity protein phosphatase 1-B, found in Xenopus laevis (African clawed frog).